A 226-amino-acid chain; its full sequence is MGPLPRTVELFYDVLSPYSWLGFEILCRYQNIWNINLQLRPSLITGIMKDSGNKPPGLLPRKGLYMANDLKLLRHHLQIPIHFPKDFLSVMLEKGSLSAMRFLTAVNLEHPEMLEKASRELWMRVWSRNEDITEPQSILAAAEKAGMSAEQAQGLLEKIATPKVKNQLKETTEAACRYGAFGLPITVAHVDGQTHMLFGSDRMELLAHLLGEKWMGPIPPAVNARL.

Glutathione is bound at residue 16–18 (SPY). Lys-49 carries the N6-succinyllysine modification. Glutathione is bound at residue Asn-53. Residues Lys-71 and Lys-85 each carry the N6-acetyllysine modification. Lys-116 is modified (N6-acetyllysine; alternate). Lys-116 is subject to N6-succinyllysine; alternate. At Lys-144 the chain carries N6-succinyllysine. Lys-158 is subject to N6-acetyllysine; alternate. Lys-158 bears the N6-succinyllysine; alternate mark. Residues Lys-165 and Lys-169 each carry the N6-acetyllysine modification. Residues Leu-183 and 200 to 201 (SD) each bind glutathione.

The protein belongs to the GST superfamily. Kappa family. As to quaternary structure, homodimer. Ubiquitous.

It is found in the peroxisome. It catalyses the reaction RX + glutathione = an S-substituted glutathione + a halide anion + H(+). Glutathione S-transferase that catalyzes the conjugation of glutathione to exogenous and endogenous compounds. Significant glutathione conjugating activity is found only with the model substrate, 1-chloro-2,4-dinitrobenzene (CDNB). The protein is Glutathione S-transferase kappa 1 (GSTK1) of Homo sapiens (Human).